Reading from the N-terminus, the 433-residue chain is Protein RETICULATA-RELATED 1, chloroplastic (433 aa).

A chloroplast-targeting transit peptide spans methionine 1–cysteine 63. Valine 64 bears the N-acetylvaline mark. Acidic residues predominate over residues aspartate 93–aspartate 105. Residues aspartate 93–lysine 143 are disordered. Over residues asparagine 110 to aspartate 127 the composition is skewed to gly residues. Acidic residues predominate over residues glycine 128 to lysine 139. 2 consecutive transmembrane segments (helical) span residues leucine 249–alanine 269 and leucine 323–isoleucine 343.

Belongs to the RETICULATA family. Expressed in root vasculature, distal region of young leaf primordia, leaf bundle sheath cells, hydathodes and pollen grains.

The protein resides in the plastid. It localises to the chloroplast membrane. In terms of biological role, may play a role in leaf development. The protein is Protein RETICULATA-RELATED 1, chloroplastic of Arabidopsis thaliana (Mouse-ear cress).